A 247-amino-acid polypeptide reads, in one-letter code: Chymase (247 aa).

The N-terminal stretch at 1 to 19 (MLLLPLPLLLLFLCSRAEA) is a signal peptide. Positions 20-21 (GE) are cleaved as a propeptide — activation peptide. Residues 22 to 245 (IIGGTECKPH…YRPWINKILQ (224 aa)) enclose the Peptidase S1 domain. C51 and C67 form a disulfide bridge. H66 acts as the Charge relay system in catalysis. N-linked (GlcNAc...) asparagine glycosylation is found at N80 and N103. D110 acts as the Charge relay system in catalysis. Disulfide bonds link C144-C209 and C175-C188. S203 acts as the Charge relay system in catalysis.

The protein belongs to the peptidase S1 family. Granzyme subfamily.

It is found in the secreted. Its subcellular location is the cytoplasmic granule. It carries out the reaction Preferential cleavage: Phe-|-Xaa &gt; Tyr-|-Xaa &gt; Trp-|-Xaa &gt; Leu-|-Xaa.. Its function is as follows. Major secreted protease of mast cells with suspected roles in vasoactive peptide generation, extracellular matrix degradation, and regulation of gland secretion. The sequence is that of Chymase (CMA1) from Papio hamadryas (Hamadryas baboon).